The following is a 177-amino-acid chain: MANQEKVEAVALLKGKLEEKNNFILACYSGLTVEEITGLRAQLRKEGSEMKVLKNNLFLRALKESGAHKDKNISFGPEYQGPLAAIFAKDNLPTVAKVCKDFAKVNKNLIVRAGYMDGSVLDANGVEAIAGLPSREQLLAMIAGGINAPARTIASGINQIVASLARAIQATAEKNNA.

Belongs to the universal ribosomal protein uL10 family. As to quaternary structure, part of the ribosomal stalk of the 50S ribosomal subunit. The N-terminus interacts with L11 and the large rRNA to form the base of the stalk. The C-terminus forms an elongated spine to which L12 dimers bind in a sequential fashion forming a multimeric L10(L12)X complex.

Functionally, forms part of the ribosomal stalk, playing a central role in the interaction of the ribosome with GTP-bound translation factors. This Leptospira borgpetersenii serovar Hardjo-bovis (strain JB197) protein is Large ribosomal subunit protein uL10.